The sequence spans 393 residues: S-adenosylmethionine synthase 2 (393 aa).

Residue Glu-9 participates in Mg(2+) binding. His-15 is an ATP binding site. A K(+)-binding site is contributed by Glu-43. Residues Glu-56 and Gln-99 each contribute to the L-methionine site. Residues 167–169 (DGK), 235–238 (SGRF), Asp-246, 252–253 (RK), Ala-269, Lys-273, and Lys-277 contribute to the ATP site. Asp-246 is an L-methionine binding site. Lys-277 lines the L-methionine pocket.

Belongs to the AdoMet synthase family. As to quaternary structure, homotetramer. Mn(2+) is required as a cofactor. Mg(2+) serves as cofactor. It depends on Co(2+) as a cofactor. Requires K(+) as cofactor. Mostly expressed in flowers, seedpods and roots, and, to a lower extent, in stems and leaves.

It is found in the cytoplasm. The enzyme catalyses L-methionine + ATP + H2O = S-adenosyl-L-methionine + phosphate + diphosphate. It participates in amino-acid biosynthesis; S-adenosyl-L-methionine biosynthesis; S-adenosyl-L-methionine from L-methionine: step 1/1. Its function is as follows. Catalyzes the formation of S-adenosylmethionine from methionine and ATP. The reaction comprises two steps that are both catalyzed by the same enzyme: formation of S-adenosylmethionine (AdoMet) and triphosphate, and subsequent hydrolysis of the triphosphate. In Brassica juncea (Indian mustard), this protein is S-adenosylmethionine synthase 2 (MSAMS2).